The following is a 430-amino-acid chain: Ribosomal protein uS12 methylthiotransferase RimO (430 aa).

Positions 2–118 (AKIFTISLGC…IDNVIKRPKH (117 aa)) constitute an MTTase N-terminal domain. Positions 11, 47, 81, 150, 154, and 157 each coordinate [4Fe-4S] cluster. The Radical SAM core domain maps to 136-368 (LTAPHSAYLK…AQSRVIDSIN (233 aa)). A TRAM domain is found at 369–430 (RKLKGKTVKV…KGYNRTGKII (62 aa)).

The protein belongs to the methylthiotransferase family. RimO subfamily. [4Fe-4S] cluster serves as cofactor.

The protein localises to the cytoplasm. It carries out the reaction L-aspartate(89)-[ribosomal protein uS12]-hydrogen + (sulfur carrier)-SH + AH2 + 2 S-adenosyl-L-methionine = 3-methylsulfanyl-L-aspartate(89)-[ribosomal protein uS12]-hydrogen + (sulfur carrier)-H + 5'-deoxyadenosine + L-methionine + A + S-adenosyl-L-homocysteine + 2 H(+). Catalyzes the methylthiolation of an aspartic acid residue of ribosomal protein uS12. The protein is Ribosomal protein uS12 methylthiotransferase RimO of Elusimicrobium minutum (strain Pei191).